A 513-amino-acid chain; its full sequence is Protein disulfide-isomerase (513 aa).

Residues 1–25 (MAISKVWISLLLALAVVLSAPAARA) form the signal peptide. One can recognise a Thioredoxin 1 domain in the interval 26 to 149 (EEAAAAEEAA…IVEYLKKQVG (124 aa)). Active-site nucleophile residues include Cys-67 and Cys-70. A disulfide bridge connects residues Cys-67 and Cys-70. A glycan (N-linked (GlcNAc...) asparagine) is linked at Asn-282. In terms of domain architecture, Thioredoxin 2 spans 369–488 (FRKSEPIPEA…IVDYIRKNKE (120 aa)). Catalysis depends on nucleophile residues Cys-411 and Cys-414. Cys-411 and Cys-414 form a disulfide bridge. Residues 491 to 507 (GQAAAATEKAAEPAATE) show a composition bias toward low complexity. The disordered stretch occupies residues 491–513 (GQAAAATEKAAEPAATEPLKDEL). A Prevents secretion from ER motif is present at residues 510-513 (KDEL).

The protein belongs to the protein disulfide isomerase family.

It is found in the endoplasmic reticulum lumen. The catalysed reaction is Catalyzes the rearrangement of -S-S- bonds in proteins.. In terms of biological role, participates in the folding of proteins containing disulfide bonds, may be involved in glycosylation, prolyl hydroxylation and triglyceride transfer. The chain is Protein disulfide-isomerase (PDI) from Hordeum vulgare (Barley).